A 365-amino-acid chain; its full sequence is Spermidine-binding periplasmic protein SpuE (365 aa).

An N-terminal signal peptide occupies residues 1-24; sequence MQHSIGKTLLVAALATAIAGPVQA. Residues Thr35, Glu181, Asp242, and Asn269 each coordinate spermidine.

Belongs to the bacterial solute-binding protein PotD/PotF family.

It is found in the periplasm. Functionally, spermidine-binding protein probably required for its uptake into cells. Binds spermidine with high affinity (KD=14.3 nM). Does not bind putrescine, cadaverine or spermine. Spermidine binding induces large inter-domain conformational changes. Implicated in induction of type 3 secretion systems (T3SS), which play a role in virulence. In Pseudomonas aeruginosa (strain ATCC 15692 / DSM 22644 / CIP 104116 / JCM 14847 / LMG 12228 / 1C / PRS 101 / PAO1), this protein is Spermidine-binding periplasmic protein SpuE (spuE).